A 207-amino-acid chain; its full sequence is MNCEEYRKKLKLNYGNREKLKVLKELYQMEVDEITKLNILDDVFELLTSTKERGFEDIISTHYTSDSKNKAIIYYCIKIIEKVGIKYPNLVYIYIPYLIKLLDSEFECIRFASAEALANIPSKLTIYAYPKLIKKLDNEVYAKVLVKLIMKSDNKEAILLKLFENFNEYSLYVIKELYKYDKELVYEFIPLILKEFGNNGLYSFLQK.

This is an uncharacterized protein from Methanocaldococcus jannaschii (strain ATCC 43067 / DSM 2661 / JAL-1 / JCM 10045 / NBRC 100440) (Methanococcus jannaschii).